Consider the following 363-residue polypeptide: Pyruvate dehydrogenase E1 component subunit beta-1, mitochondrial (363 aa).

A mitochondrion-targeting transit peptide spans 1–29 (MLGILRQRAIDGASTLRRTRFALVSARSY). A thiamine diphosphate-binding site is contributed by glutamate 92. Residues isoleucine 145, alanine 193, isoleucine 194, and aspartate 196 each contribute to the K(+) site. Residues lysine 247 and lysine 254 each participate in a glycyl lysine isopeptide (Lys-Gly) (interchain with G-Cter in ubiquitin) cross-link.

As to quaternary structure, tetramer of 2 alpha and 2 beta subunits. Requires thiamine diphosphate as cofactor. As to expression, expressed in roots, immature rosettes, and mature rosettes.

The protein resides in the mitochondrion matrix. The enzyme catalyses N(6)-[(R)-lipoyl]-L-lysyl-[protein] + pyruvate + H(+) = N(6)-[(R)-S(8)-acetyldihydrolipoyl]-L-lysyl-[protein] + CO2. Functionally, the pyruvate dehydrogenase complex catalyzes the overall conversion of pyruvate to acetyl-CoA and CO(2). It contains multiple copies of three enzymatic components: pyruvate dehydrogenase (E1), dihydrolipoamide acetyltransferase (E2) and lipoamide dehydrogenase (E3). The sequence is that of Pyruvate dehydrogenase E1 component subunit beta-1, mitochondrial (PDH2) from Arabidopsis thaliana (Mouse-ear cress).